We begin with the raw amino-acid sequence, 71 residues long: UPF0435 protein SE_1565 (71 aa).

Belongs to the UPF0435 family.

The sequence is that of UPF0435 protein SE_1565 from Staphylococcus epidermidis (strain ATCC 12228 / FDA PCI 1200).